The chain runs to 394 residues: Magnesium transporter MRS2-2 (394 aa).

A disordered region spans residues 115–145 (PVGNASHNGGQGDGKEIAGAQNDGDTGDEDE). A run of 2 helical transmembrane segments spans residues 329–349 (LVLS…GIFG) and 366–386 (YVVG…MSYA). Positions 349 to 351 (GMN) match the Required for magnesium transport activity motif.

It belongs to the CorA metal ion transporter (MIT) (TC 1.A.35.5) family. Expressed in the whole plant but preferentially in the mature anthers.

The protein resides in the membrane. Functionally, low-affinity magnesium transporter that mediates the influx of magnesium. Plays a crucial role in male gametophyte development and male fertility. The sequence is that of Magnesium transporter MRS2-2 (MRS2-2) from Arabidopsis thaliana (Mouse-ear cress).